Reading from the N-terminus, the 127-residue chain is Aspartate 1-decarboxylase (127 aa).

Catalysis depends on Ser-25, which acts as the Schiff-base intermediate with substrate; via pyruvic acid. A Pyruvic acid (Ser) modification is found at Ser-25. Thr-57 provides a ligand contact to substrate. Tyr-58 serves as the catalytic Proton donor. Residue 73-75 (GAA) participates in substrate binding.

Belongs to the PanD family. Heterooctamer of four alpha and four beta subunits. The cofactor is pyruvate. In terms of processing, is synthesized initially as an inactive proenzyme, which is activated by self-cleavage at a specific serine bond to produce a beta-subunit with a hydroxyl group at its C-terminus and an alpha-subunit with a pyruvoyl group at its N-terminus.

It is found in the cytoplasm. The catalysed reaction is L-aspartate + H(+) = beta-alanine + CO2. It functions in the pathway cofactor biosynthesis; (R)-pantothenate biosynthesis; beta-alanine from L-aspartate: step 1/1. In terms of biological role, catalyzes the pyruvoyl-dependent decarboxylation of aspartate to produce beta-alanine. This chain is Aspartate 1-decarboxylase, found in Carboxydothermus hydrogenoformans (strain ATCC BAA-161 / DSM 6008 / Z-2901).